Consider the following 430-residue polypeptide: Serine hydroxymethyltransferase (430 aa).

Residue 120 to 122 participates in (6S)-5,6,7,8-tetrahydrofolate binding; that stretch reads GHI. K226 carries the post-translational modification N6-(pyridoxal phosphate)lysine.

Belongs to the SHMT family. Homodimer. The cofactor is pyridoxal 5'-phosphate.

The protein localises to the cytoplasm. Its pathway is amino-acid biosynthesis; glycine biosynthesis; glycine from L-serine: step 1/1. Its function is as follows. Catalyzes the reversible interconversion of serine and glycine with a modified folate serving as the one-carbon carrier. Also exhibits a pteridine-independent aldolase activity toward beta-hydroxyamino acids, producing glycine and aldehydes, via a retro-aldol mechanism. The sequence is that of Serine hydroxymethyltransferase from Pyrobaculum aerophilum (strain ATCC 51768 / DSM 7523 / JCM 9630 / CIP 104966 / NBRC 100827 / IM2).